The primary structure comprises 438 residues: V-type ATP synthase beta chain (438 aa).

This sequence belongs to the ATPase alpha/beta chains family.

Functionally, produces ATP from ADP in the presence of a proton gradient across the membrane. The V-type beta chain is a regulatory subunit. In Chlamydia trachomatis serovar A (strain ATCC VR-571B / DSM 19440 / HAR-13), this protein is V-type ATP synthase beta chain.